The chain runs to 315 residues: Shiga-like toxin 1 subunit A (315 aa).

An N-terminal signal peptide occupies residues 1–22; that stretch reads MKIIIFRVLTFFFVIFSVNVVA. The interval 23 to 273 is A1; that stretch reads KEFTLDFSTA…CHHHASRVAR (251 aa). The active site involves Glu189. Cys264 and Cys283 are joined by a disulfide. Residues 274 to 315 are A2; that stretch reads MASDEFPSMCPADGRVRGITHNKILWDSSTLGAILMRRTISS.

This sequence belongs to the ribosome-inactivating protein family. Shiga-like toxin contains a single subunit A and five copies of subunit B.

It is found in the secreted. It carries out the reaction Endohydrolysis of the N-glycosidic bond at one specific adenosine on the 28S rRNA.. In terms of biological role, the A subunit is responsible for inhibiting protein synthesis through the catalytic inactivation of 60S ribosomal subunits. After endocytosis, the A subunit is cleaved by furin in two fragments, A1 and A2: A1 is the catalytically active fragment, and A2 is essential for holotoxin assembly with the B subunits. This chain is Shiga-like toxin 1 subunit A (stxA), found in Escherichia coli (Bacteriophage H19B).